The primary structure comprises 354 residues: Uroporphyrinogen decarboxylase (354 aa).

Substrate is bound by residues arginine 27–arginine 31, aspartate 77, tyrosine 154, threonine 209, and histidine 327.

Belongs to the uroporphyrinogen decarboxylase family. Homodimer.

The protein resides in the cytoplasm. The catalysed reaction is uroporphyrinogen III + 4 H(+) = coproporphyrinogen III + 4 CO2. It participates in porphyrin-containing compound metabolism; protoporphyrin-IX biosynthesis; coproporphyrinogen-III from 5-aminolevulinate: step 4/4. In terms of biological role, catalyzes the decarboxylation of four acetate groups of uroporphyrinogen-III to yield coproporphyrinogen-III. This chain is Uroporphyrinogen decarboxylase, found in Sodalis glossinidius (strain morsitans).